The chain runs to 200 residues: Exopolysaccharide production protein PSS (200 aa).

Belongs to the bacterial sugar transferase family.

This is Exopolysaccharide production protein PSS (pss) from Rhizobium leguminosarum bv. phaseoli.